Reading from the N-terminus, the 439-residue chain is Agmatine coumaroyltransferase-1 (439 aa).

Active-site proton acceptor residues include His-152 and Asp-385.

The protein belongs to the plant acyltransferase family. Monomer.

It carries out the reaction 4-coumaroyl-CoA + agmatine = N-(4-guanidinobutyl)-4-hydroxycinnamamide + CoA + H(+). With respect to regulation, inhibited by DEPC. Completely inhibited by ZnSO(4), strongly inhibited by CuSO(4), partially inhibited by MnCl(2). Unaffected by MgCl(2) or CaCl(2). In terms of biological role, involved in the synthesis of hordatines (antifungal hydroxycinnamoylagmatine derivatives). Specific for agmatine as the acyl acceptor, inactive towards tyramine and putrescine. Has activity with the acyl donors 4-coumaroyl-CoA, cinnamoyl-CoA, caffeoyl-CoA, feruloyl-CoA, and to a lesser extent sinapoyl-CoA. This chain is Agmatine coumaroyltransferase-1 (ACT-1), found in Hordeum vulgare (Barley).